A 429-amino-acid polypeptide reads, in one-letter code: Enolase (429 aa).

Glutamine 163 lines the (2R)-2-phosphoglycerate pocket. The active-site Proton donor is the glutamate 205. Positions 242, 285, and 312 each coordinate Mg(2+). Positions 337, 366, 367, and 388 each coordinate (2R)-2-phosphoglycerate. The active-site Proton acceptor is lysine 337.

It belongs to the enolase family. The cofactor is Mg(2+).

The protein localises to the cytoplasm. The protein resides in the secreted. Its subcellular location is the cell surface. The catalysed reaction is (2R)-2-phosphoglycerate = phosphoenolpyruvate + H2O. It functions in the pathway carbohydrate degradation; glycolysis; pyruvate from D-glyceraldehyde 3-phosphate: step 4/5. Catalyzes the reversible conversion of 2-phosphoglycerate (2-PG) into phosphoenolpyruvate (PEP). It is essential for the degradation of carbohydrates via glycolysis. This Oceanobacillus iheyensis (strain DSM 14371 / CIP 107618 / JCM 11309 / KCTC 3954 / HTE831) protein is Enolase.